The following is a 235-amino-acid chain: Small ribosomal subunit protein uS2c (235 aa).

The protein belongs to the universal ribosomal protein uS2 family.

It is found in the plastid. Its subcellular location is the chloroplast. The protein is Small ribosomal subunit protein uS2c (rps2) of Adiantum capillus-veneris (Maidenhair fern).